Here is a 113-residue protein sequence, read N- to C-terminus: MISSVQNVSNLSMTRALGAVDTENSASSSAATMPGTAGAANGVSFASVMGNMASDAVNSLKGAESMSFAGIKGTATTREVVDSMLQAEQTLQTAIAIRDKVVSAFLEVTKMQM.

This sequence belongs to the FliE family.

Its subcellular location is the bacterial flagellum basal body. The sequence is that of Flagellar hook-basal body complex protein FliE from Rhizobium etli (strain CIAT 652).